Reading from the N-terminus, the 153-residue chain is Ribosome maturation factor RimP (153 aa).

The protein belongs to the RimP family.

The protein resides in the cytoplasm. Functionally, required for maturation of 30S ribosomal subunits. In Marinomonas sp. (strain MWYL1), this protein is Ribosome maturation factor RimP.